Reading from the N-terminus, the 386-residue chain is Glucose-1-phosphate adenylyltransferase (386 aa).

Residues Tyr-100, Gly-165, 180-181 (EK), and Ser-191 each bind alpha-D-glucose 1-phosphate.

Belongs to the bacterial/plant glucose-1-phosphate adenylyltransferase family. Homotetramer.

It carries out the reaction alpha-D-glucose 1-phosphate + ATP + H(+) = ADP-alpha-D-glucose + diphosphate. Its pathway is glycan biosynthesis; glycogen biosynthesis. Its function is as follows. Involved in the biosynthesis of ADP-glucose, a building block required for the elongation reactions to produce glycogen. Catalyzes the reaction between ATP and alpha-D-glucose 1-phosphate (G1P) to produce pyrophosphate and ADP-Glc. The polypeptide is Glucose-1-phosphate adenylyltransferase (Clostridium beijerinckii (strain ATCC 51743 / NCIMB 8052) (Clostridium acetobutylicum)).